We begin with the raw amino-acid sequence, 285 residues long: Transcription factor LBX1 (285 aa).

A compositionally biased stretch (basic and acidic residues) spans 1–20; sequence MTSKEDGKAAPGEERRRSPL. The segment at 1–36 is disordered; that stretch reads MTSKEDGKAAPGEERRRSPLDHLPPPANSNKPLTPF. The segment at residues 125–184 is a DNA-binding region (homeobox); that stretch reads RRKSRTAFTNHQIYELEKRFLYQKYLSPADRDQIAQQLGLTNAQVITWFQNRRAKLKRDL. Residues 212 to 285 are disordered; that stretch reads EQNSEASGGG…EEDEEIDVDD (74 aa). The span at 218-230 shows a compositional bias: gly residues; that stretch reads SGGGGGGGGGGCG. Acidic residues predominate over residues 272–285; that stretch reads CSEDEEDEEIDVDD.

In terms of assembly, interacts with SKOR1 which acts as a transcriptional corepressor.

It is found in the nucleus. Its function is as follows. Transcription factor required for the development of GABAergic interneurons in the dorsal horn of the spinal cord and migration and further development of hypaxial muscle precursor cells for limb muscles, diaphragm and hypoglossal cord. This is Transcription factor LBX1 from Rattus norvegicus (Rat).